We begin with the raw amino-acid sequence, 364 residues long: Methylthioribose-1-phosphate isomerase (364 aa).

The active-site Proton donor is aspartate 254.

The protein belongs to the eIF-2B alpha/beta/delta subunits family. MtnA subfamily.

Its subcellular location is the cytoplasm. It is found in the nucleus. It catalyses the reaction 5-(methylsulfanyl)-alpha-D-ribose 1-phosphate = 5-(methylsulfanyl)-D-ribulose 1-phosphate. Its pathway is amino-acid biosynthesis; L-methionine biosynthesis via salvage pathway; L-methionine from S-methyl-5-thio-alpha-D-ribose 1-phosphate: step 1/6. In terms of biological role, catalyzes the interconversion of methylthioribose-1-phosphate (MTR-1-P) into methylthioribulose-1-phosphate (MTRu-1-P). The protein is Methylthioribose-1-phosphate isomerase of Drosophila sechellia (Fruit fly).